Here is a 103-residue protein sequence, read N- to C-terminus: Ubiquitin-related modifier 1 (103 aa).

A 1-thioglycine modification is found at Gly-103. Residue Gly-103 forms a Glycyl lysine isopeptide (Gly-Lys) (interchain with K-? in acceptor proteins) linkage.

It belongs to the URM1 family. C-terminal thiocarboxylation occurs in 2 steps, it is first acyl-adenylated (-COAMP) via the hesA/moeB/thiF part of UBA4, then thiocarboxylated (-COSH) via the rhodanese domain of UBA4.

It is found in the cytoplasm. The protein operates within tRNA modification; 5-methoxycarbonylmethyl-2-thiouridine-tRNA biosynthesis. Functionally, acts as a sulfur carrier required for 2-thiolation of mcm(5)S(2)U at tRNA wobble positions of cytosolic tRNA(Lys), tRNA(Glu) and tRNA(Gln). Serves as sulfur donor in tRNA 2-thiolation reaction by being thiocarboxylated (-COSH) at its C-terminus by the MOCS3 homolog UBA4. The sulfur is then transferred to tRNA to form 2-thiolation of mcm(5)S(2)U. Prior mcm(5) tRNA modification by the elongator complex is required for 2-thiolation. Also acts as a ubiquitin-like protein (UBL) that is covalently conjugated via an isopeptide bond to lysine residues of target proteins such as AHP1. The thiocarboxylated form serves as substrate for conjugation and oxidative stress specifically induces the formation of UBL-protein conjugates. In Vanderwaltozyma polyspora (strain ATCC 22028 / DSM 70294 / BCRC 21397 / CBS 2163 / NBRC 10782 / NRRL Y-8283 / UCD 57-17) (Kluyveromyces polysporus), this protein is Ubiquitin-related modifier 1.